Consider the following 311-residue polypeptide: tRNA-cytidine(32) 2-sulfurtransferase (311 aa).

The short motif at 47–52 (SGGKDS) is the PP-loop motif element. Residues Cys-122, Cys-125, and Cys-213 each contribute to the [4Fe-4S] cluster site.

Belongs to the TtcA family. Homodimer. Mg(2+) is required as a cofactor. It depends on [4Fe-4S] cluster as a cofactor.

The protein localises to the cytoplasm. It catalyses the reaction cytidine(32) in tRNA + S-sulfanyl-L-cysteinyl-[cysteine desulfurase] + AH2 + ATP = 2-thiocytidine(32) in tRNA + L-cysteinyl-[cysteine desulfurase] + A + AMP + diphosphate + H(+). It functions in the pathway tRNA modification. Catalyzes the ATP-dependent 2-thiolation of cytidine in position 32 of tRNA, to form 2-thiocytidine (s(2)C32). The sulfur atoms are provided by the cysteine/cysteine desulfurase (IscS) system. The protein is tRNA-cytidine(32) 2-sulfurtransferase of Enterobacter sp. (strain 638).